Reading from the N-terminus, the 507-residue chain is Sugar transport protein 8 (507 aa).

Topologically, residues Met1–Tyr21 are cytoplasmic. 12 helical membrane passes run Val22–Ile42, Phe79–Ser99, Ile116–Ile136, Ile139–Ile159, Gly166–Val186, Ile200–Cys220, Phe281–Phe301, Leu319–Val339, Phe346–Leu366, Leu382–Leu402, Gly419–Leu439, and Gly448–Val468. Topologically, residues Pro469–Asp507 are cytoplasmic.

Belongs to the major facilitator superfamily. Sugar transporter (TC 2.A.1.1) family.

The protein resides in the membrane. In terms of biological role, mediates an active uptake of hexoses, probably by sugar/hydrogen symport. This chain is Sugar transport protein 8 (STP8), found in Arabidopsis thaliana (Mouse-ear cress).